The chain runs to 442 residues: Cation channel sperm-associated protein 4 (442 aa).

Topologically, residues 1–66 are cytoplasmic; it reads MSEKHKWWQQ…TQMYIKQLLR (66 aa). A helical membrane pass occupies residues 67–88; it reads HPAFQLLLAFLLLSNAITIALR. Residues 89 to 98 lie on the Extracellular side of the membrane; sequence TNSYLGQKHY. Residues 99–125 form a helical membrane-spanning segment; that stretch reads ELFSTIDDIVLTILICEVLLGWLNGFW. Over 126-129 the chain is Cytoplasmic; it reads IFWK. The chain crosses the membrane as a helical span at residues 130-153; it reads DGWNILNFAIVFILFMGFFIKQLD. Residues 154 to 156 lie on the Extracellular side of the membrane; it reads MVA. Residues 157–175 form a helical membrane-spanning segment; that stretch reads ITYPLRVLRLVHVCMAVEP. Residues 176-188 lie on the Cytoplasmic side of the membrane; the sequence is LARIIKVILQSMP. Residues 189 to 212 traverse the membrane as a helical segment; sequence DLANVMALILFFMLVFSVFGVTLF. Residues 213-222 are Extracellular-facing; that stretch reads GAFVPKHFQN. The segment at residues 223–234 is an intramembrane region (helical; Pore-forming); the sequence is MGVALYTLFICI. The Extracellular portion of the chain corresponds to 235-255; sequence TQDGWLDIYTDFQMDEREYAM. A helical transmembrane segment spans residues 256–283; sequence EVGGAIYFAVFITLGAFIGLNLFVVVVT. Residues 284–442 are Cytoplasmic-facing; the sequence is TNLEQMMKTG…NMVNKHKFSH (159 aa).

This sequence belongs to the cation channel sperm-associated (TC 1.A.1.19) family. As to quaternary structure, component of the CatSper complex or CatSpermasome composed of the core pore-forming members CATSPER1, CATSPER2, CATSPER3 and CATSPER4 as well as auxiliary members CATSPERB, CATSPERG2, CATSPERD, CATSPERE, CATSPERZ, C2CD6/CATSPERT, SLCO6C1, TMEM249, TMEM262 and EFCAB9. HSPA1 may be an additional auxiliary complex member. The core complex members CATSPER1, CATSPER2, CATSPER3 and CATSPER4 form a heterotetrameric channel. The auxiliary CATSPERB, CATSPERG2, CATSPERD and CATSPERE subunits form a pavilion-like structure over the pore which stabilizes the complex through interactions with CATSPER4, CATSPER3, CATSPER1 and CATSPER2 respectively. SLCO6C1 interacts with CATSPERE and TMEM262/CATSPERH interacts with CATSPERB, further stabilizing the complex. C2CD6/CATSPERT interacts at least with CATSPERD and is required for targeting the CatSper complex in the flagellar membrane. As to expression, testis-specific.

The protein resides in the cell projection. The protein localises to the cilium. It localises to the flagellum membrane. It catalyses the reaction Ca(2+)(in) = Ca(2+)(out). Its activity is regulated as follows. In contrast to the human ortholog, not activated by progesterone. Activated by intracellular alkalinization. Functionally, pore-forming subunit of the CatSper complex, a sperm-specific voltage-gated calcium channel that plays a central role in sperm cell hyperactivation. Controls calcium entry to mediate the hyperactivated motility, a step needed for sperm motility which is essential late in the preparation of sperm for fertilization. The sequence is that of Cation channel sperm-associated protein 4 (Catsper4) from Mus musculus (Mouse).